The primary structure comprises 438 residues: uncharacterized protein (438 aa).

The N-terminal stretch at 1–32 (MARPLLGKTSSVRRRLESLSACSIFFFLRKFC) is a signal peptide.

This is an uncharacterized protein from Frog virus 3 (isolate Goorha) (FV-3).